A 185-amino-acid chain; its full sequence is Peptidyl-tRNA hydrolase (185 aa).

Y14 is a binding site for tRNA. The Proton acceptor role is filled by H19. Residues Y64, N66, and N112 each coordinate tRNA.

The protein belongs to the PTH family. As to quaternary structure, monomer.

It is found in the cytoplasm. The catalysed reaction is an N-acyl-L-alpha-aminoacyl-tRNA + H2O = an N-acyl-L-amino acid + a tRNA + H(+). Its function is as follows. Hydrolyzes ribosome-free peptidyl-tRNAs (with 1 or more amino acids incorporated), which drop off the ribosome during protein synthesis, or as a result of ribosome stalling. In terms of biological role, catalyzes the release of premature peptidyl moieties from peptidyl-tRNA molecules trapped in stalled 50S ribosomal subunits, and thus maintains levels of free tRNAs and 50S ribosomes. The polypeptide is Peptidyl-tRNA hydrolase (Lactobacillus acidophilus (strain ATCC 700396 / NCK56 / N2 / NCFM)).